Here is a 530-residue protein sequence, read N- to C-terminus: MNNARPIRRALISVSDKTGIVEFAQALAERGVDILSTGGTARLLAEKGISVTEVSDYTGFPEMMDGRVKTLHPKVHGGVLGRRGQDDGIMEQHGINPIDMVVVNLYPFAETVAKEGCTLADAVENIDIGGPTMVRSAAKNHKDVTIVVNAHDYDRVITEMDANEKSLTLETRFDLAIAAFEHTASYDGMIANYFGTMVPSYGENKEGDEESKFPRTFNQQFEKKQDMRYGENSHQAAAFYVEANPEEASVSTARQIQGKALSYNNIADTDAALECVKEFDEPACVIVKHANPCGVALGKNILEAYDRAFKTDPTSAFGGIIAFNRELDAATATAITERQFVEVIIAPSVSAEAVEIVAAKKNLRLLECGEWTTKTTGFDVKRVNGGLLVQDRDQGMVSEDDLQVVSKRQPTAEELKDALFCWKVAKYVKSNAIVYSKGDMTIGVGAGQMSRVYSAKIAGIKAADEGLQVEGCVMASDAFFPFRDGIDAAAEAGIKCVIQPGGSMRDNEVIEAADEHGMAMIFTGMRHFRH.

Positions 1–148 constitute an MGS-like domain; that stretch reads MNNARPIRRA…KNHKDVTIVV (148 aa).

The protein belongs to the PurH family.

It carries out the reaction (6R)-10-formyltetrahydrofolate + 5-amino-1-(5-phospho-beta-D-ribosyl)imidazole-4-carboxamide = 5-formamido-1-(5-phospho-D-ribosyl)imidazole-4-carboxamide + (6S)-5,6,7,8-tetrahydrofolate. The catalysed reaction is IMP + H2O = 5-formamido-1-(5-phospho-D-ribosyl)imidazole-4-carboxamide. It participates in purine metabolism; IMP biosynthesis via de novo pathway; 5-formamido-1-(5-phospho-D-ribosyl)imidazole-4-carboxamide from 5-amino-1-(5-phospho-D-ribosyl)imidazole-4-carboxamide (10-formyl THF route): step 1/1. The protein operates within purine metabolism; IMP biosynthesis via de novo pathway; IMP from 5-formamido-1-(5-phospho-D-ribosyl)imidazole-4-carboxamide: step 1/1. The sequence is that of Bifunctional purine biosynthesis protein PurH from Aliivibrio fischeri (strain MJ11) (Vibrio fischeri).